The sequence spans 340 residues: Uroporphyrinogen decarboxylase (340 aa).

Residues 21-25 (RQAGR), Asp71, Tyr148, Ser203, and His316 each bind substrate.

This sequence belongs to the uroporphyrinogen decarboxylase family. As to quaternary structure, homodimer.

It is found in the cytoplasm. It catalyses the reaction uroporphyrinogen III + 4 H(+) = coproporphyrinogen III + 4 CO2. It functions in the pathway porphyrin-containing compound metabolism; protoporphyrin-IX biosynthesis; coproporphyrinogen-III from 5-aminolevulinate: step 4/4. In terms of biological role, catalyzes the decarboxylation of four acetate groups of uroporphyrinogen-III to yield coproporphyrinogen-III. This chain is Uroporphyrinogen decarboxylase, found in Campylobacter jejuni (strain RM1221).